The primary structure comprises 585 residues: UvrABC system protein C (585 aa).

The GIY-YIG domain occupies Ala15–Val90. In terms of domain architecture, UVR spans Gly198–Phe233.

It belongs to the UvrC family. In terms of assembly, interacts with UvrB in an incision complex.

It localises to the cytoplasm. The UvrABC repair system catalyzes the recognition and processing of DNA lesions. UvrC both incises the 5' and 3' sides of the lesion. The N-terminal half is responsible for the 3' incision and the C-terminal half is responsible for the 5' incision. The chain is UvrABC system protein C from Haloquadratum walsbyi (strain DSM 16790 / HBSQ001).